Consider the following 134-residue polypeptide: ATP synthase epsilon chain, chloroplastic (134 aa).

It belongs to the ATPase epsilon chain family. As to quaternary structure, F-type ATPases have 2 components, CF(1) - the catalytic core - and CF(0) - the membrane proton channel. CF(1) has five subunits: alpha(3), beta(3), gamma(1), delta(1), epsilon(1). CF(0) has three main subunits: a, b and c.

It is found in the plastid. It localises to the chloroplast thylakoid membrane. Functionally, produces ATP from ADP in the presence of a proton gradient across the membrane. The sequence is that of ATP synthase epsilon chain, chloroplastic from Pyropia yezoensis (Susabi-nori).